Reading from the N-terminus, the 405-residue chain is 8-amino-7-oxononanoate synthase (405 aa).

Substrate is bound at residue Arg23. 114–115 (GY) contacts pyridoxal 5'-phosphate. His139 is a substrate binding site. Residues Ser185, His213, and Thr245 each contribute to the pyridoxal 5'-phosphate site. Lys248 is subject to N6-(pyridoxal phosphate)lysine. Thr366 provides a ligand contact to substrate.

It belongs to the class-II pyridoxal-phosphate-dependent aminotransferase family. BioF subfamily. In terms of assembly, homodimer. The cofactor is pyridoxal 5'-phosphate.

It catalyses the reaction 6-carboxyhexanoyl-[ACP] + L-alanine + H(+) = (8S)-8-amino-7-oxononanoate + holo-[ACP] + CO2. It participates in cofactor biosynthesis; biotin biosynthesis. Its function is as follows. Catalyzes the decarboxylative condensation of pimeloyl-[acyl-carrier protein] and L-alanine to produce 8-amino-7-oxononanoate (AON), [acyl-carrier protein], and carbon dioxide. The polypeptide is 8-amino-7-oxononanoate synthase (Delftia acidovorans (strain DSM 14801 / SPH-1)).